We begin with the raw amino-acid sequence, 1028 residues long: Ubiquitin conjugation factor E4 A (1028 aa).

The interval 33-57 is disordered; that stretch reads KEQLKQQSDELPASPDDSDNSVSES. Lys386 carries the N6-acetyllysine modification. Residues 949–1023 form the U-box domain; it reads DACDEFLDPI…QRWLAERKQQ (75 aa).

This sequence belongs to the ubiquitin conjugation factor E4 family. Expressed in liver, heart, brain, kidney and testis.

Its subcellular location is the cytoplasm. It carries out the reaction S-ubiquitinyl-[E2 ubiquitin-conjugating enzyme]-L-cysteine + [acceptor protein]-L-lysine = [E2 ubiquitin-conjugating enzyme]-L-cysteine + N(6)-ubiquitinyl-[acceptor protein]-L-lysine.. Its pathway is protein modification; protein ubiquitination. Functionally, ubiquitin-protein ligase that probably functions as an E3 ligase in conjunction with specific E1 and E2 ligases. May also function as an E4 ligase mediating the assembly of polyubiquitin chains on substrates ubiquitinated by another E3 ubiquitin ligase. Mediates 'Lys-48'-linked polyubiquitination of substrates. The sequence is that of Ubiquitin conjugation factor E4 A from Mus musculus (Mouse).